The chain runs to 897 residues: Probable bifunctional chitinase/lysozyme (897 aa).

The N-terminal stretch at 1-24 is a signal peptide; sequence MKLNIFTKSMIGMGLVCSALPALA. One can recognise a Chitin-binding type-3 1 domain in the interval 25–91; that stretch reads MEAWNNQQGG…SQFGNTLSCE (67 aa). Disordered stretches follow at residues 90–127, 182–222, and 287–333; these read CEKS…SNSS, TEIS…PADK, and QYGN…DSVN. The segment covering 95–111 has biased composition (low complexity); it reads SSSSSNSNTPASNTPAN. Composition is skewed to polar residues over residues 113-127 and 182-197; these read GSAT…SNSS and TEIS…TSAP. In terms of domain architecture, Chitin-binding type-3 2 spans 128 to 194; sequence VVAWNKQQGG…SETSNPQSCT (67 aa). Residues 198 to 216 are compositionally biased toward pro residues; it reads QPSPDVKPAPDVKPAPDVQ. The Chitin-binding type-3 3 domain maps to 229-295; that stretch reads VVAWKGQEGS…SQYGNPGSCS (67 aa). Over residues 309–318 the composition is skewed to pro residues; it reads DPTPETPVTP. Residues 322–333 are compositionally biased toward polar residues; that stretch reads NSEPSTPADSVN. 2 Chitin-binding type-3 domains span residues 337–403 and 459–529; these read LQAW…TTCE and AKAW…PQFN. The 292-residue stretch at 586-877 folds into the GH18 domain; it reads KHVYAPYVDF…TNLSPEFHGL (292 aa). The cysteines at positions 628 and 673 are disulfide-linked. Glu700 serves as the catalytic Proton donor.

The protein belongs to the glycosyl hydrolase 18 family. Chitinase class II subfamily.

The protein localises to the periplasm. The catalysed reaction is Random endo-hydrolysis of N-acetyl-beta-D-glucosaminide (1-&gt;4)-beta-linkages in chitin and chitodextrins.. It carries out the reaction Hydrolysis of (1-&gt;4)-beta-linkages between N-acetylmuramic acid and N-acetyl-D-glucosamine residues in a peptidoglycan and between N-acetyl-D-glucosamine residues in chitodextrins.. Its function is as follows. Bifunctional enzyme with lysozyme/chitinase activity. This chain is Probable bifunctional chitinase/lysozyme (chiA), found in Escherichia coli (strain K12).